Reading from the N-terminus, the 88-residue chain is Small ribosomal subunit protein bS20 (88 aa).

A disordered region spans residues 1–27; that stretch reads MANSKSAKKRALQSEKRRQHNASRRSM.

Belongs to the bacterial ribosomal protein bS20 family.

Its function is as follows. Binds directly to 16S ribosomal RNA. The chain is Small ribosomal subunit protein bS20 from Shewanella woodyi (strain ATCC 51908 / MS32).